We begin with the raw amino-acid sequence, 397 residues long: Nickel-cobalt-cadmium resistance protein NccB (397 aa).

A helical transmembrane segment spans residues 10–30 (PSWPMIAGVAAAAALVGFGAA). Residues 137 to 195 (EAAAMAAERKVAQARADLARKTYERESSLFQQGVTPRQEMESARIALDVAQAEVQRAAT) are a coiled coil.

It belongs to the membrane fusion protein (MFP) (TC 8.A.1) family.

It localises to the cell inner membrane. Functionally, component of the NCC cation efflux system that confers resistance to nickel, cobalt and cadmium. This Alcaligenes xylosoxydans xylosoxydans (Achromobacter xylosoxidans) protein is Nickel-cobalt-cadmium resistance protein NccB (nccB).